A 359-amino-acid chain; its full sequence is Magnesium transporter NIPA2 (359 aa).

Over 1–9 the chain is Extracellular; that stretch reads MSLGRGKYD. A helical transmembrane segment spans residues 10–30; that stretch reads FYIGLGLAMTSSIFIGGSFIL. Residues 31 to 56 lie on the Cytoplasmic side of the membrane; that stretch reads KKKGLLRLARKGSMRAGQGGHAYLKE. Residues 57-77 traverse the membrane as a helical segment; the sequence is WLWWAGLLSMGAGEVANFAAY. Ala78 is a topological domain (extracellular). Residues 79-99 traverse the membrane as a helical segment; sequence FAPATLVTPLGALSVLVSAIL. Residues 100 to 107 are Cytoplasmic-facing; sequence SSYFLNER. The chain crosses the membrane as a helical span at residues 108-128; the sequence is LNLHGKIGCLLSILGSTVMVI. The Extracellular segment spans residues 129 to 149; that stretch reads HAPKEEEIETLNEMSHKLGDP. A helical membrane pass occupies residues 150 to 170; that stretch reads GFVVFATFVVIVALIFIFVVG. Residues 171-175 are Cytoplasmic-facing; sequence PRHGQ. A helical transmembrane segment spans residues 176 to 196; sequence TNILVYITICSVIGAFSVSCV. Residues 197–215 lie on the Extracellular side of the membrane; that stretch reads KGLGIAIKELLAGKPVLQH. The chain crosses the membrane as a helical span at residues 216 to 236; the sequence is PLAWILLFSLVVCVSTQINYL. The Cytoplasmic portion of the chain corresponds to 237–246; it reads NRALDIFNTS. The helical transmembrane segment at 247–267 threads the bilayer; the sequence is IVTPIYYVFFTTSVLTCSAIL. Residues 268 to 278 are Extracellular-facing; sequence FKEWQDMPVDD. The chain crosses the membrane as a helical span at residues 279 to 299; that stretch reads VIGTLSGFFTIIVGIFLLHAF. Topologically, residues 300–359 are cytoplasmic; it reads KDVSFSLASLPVSFRKDEKAMNGNLSSMYEVLNNNEDDLPCGIEHTGENISRRNGNLPSF.

This sequence belongs to the NIPA family. Widely expressed. Expressed at high levels in the kidney.

Its subcellular location is the cell membrane. It is found in the early endosome. The enzyme catalyses Mg(2+)(in) = Mg(2+)(out). Acts as a selective Mg(2+) transporter. In Mus musculus (Mouse), this protein is Magnesium transporter NIPA2 (Nipa2).